Here is a 324-residue protein sequence, read N- to C-terminus: R2-like ligand binding oxidase (324 aa).

Mn(2+) contacts are provided by Glu79, Glu112, and His115. The segment at residues 82–173 (VTEDIQPFMK…VNQVRASVTY (92 aa)) is a cross-link (3-(O4'-tyrosyl)-valine (Val-Tyr)). Glu112 contributes to the Fe cation binding site. Fe cation is bound by residues Glu178, Glu213, and His216. Positions 304-324 (PEALEEKFGEEDAKAMSEAAG) are disordered. The segment covering 307–318 (LEEKFGEEDAKA) has biased composition (basic and acidic residues).

It belongs to the ribonucleoside diphosphate reductase small chain family. R2-like ligand binding oxidase subfamily. In terms of assembly, homodimer. Fe cation is required as a cofactor. Mn(2+) serves as cofactor.

Probable oxidase. The polypeptide is R2-like ligand binding oxidase (Rhodococcus jostii (strain RHA1)).